Reading from the N-terminus, the 354-residue chain is Methylthioribose-1-phosphate isomerase (354 aa).

Substrate is bound by residues 58–60, Arg-101, and Gln-204; that span reads RGA. The active-site Proton donor is Asp-245. Residue 255 to 256 participates in substrate binding; it reads NK.

It belongs to the eIF-2B alpha/beta/delta subunits family. MtnA subfamily.

The enzyme catalyses 5-(methylsulfanyl)-alpha-D-ribose 1-phosphate = 5-(methylsulfanyl)-D-ribulose 1-phosphate. Its pathway is amino-acid biosynthesis; L-methionine biosynthesis via salvage pathway; L-methionine from S-methyl-5-thio-alpha-D-ribose 1-phosphate: step 1/6. In terms of biological role, catalyzes the interconversion of methylthioribose-1-phosphate (MTR-1-P) into methylthioribulose-1-phosphate (MTRu-1-P). In Stenotrophomonas maltophilia (strain R551-3), this protein is Methylthioribose-1-phosphate isomerase.